Consider the following 660-residue polypeptide: DNA primase (660 aa).

Residues Cys40–Cys64 form a CHC2-type zinc finger. Positions Gly94–Pro115 are disordered. Residues Val97 to Gln110 are compositionally biased toward basic and acidic residues. The region spanning Asp261–Pro343 is the Toprim domain. Residues Glu267, Asp311, and Asp313 each coordinate Mg(2+). Disordered regions lie at residues Asp425–Tyr449 and Gln476–Glu519. The segment covering Gln428–Met442 has biased composition (polar residues). The span at Pro488 to Arg498 shows a compositional bias: basic and acidic residues.

Belongs to the DnaG primase family. As to quaternary structure, monomer. Interacts with DnaB. Zn(2+) is required as a cofactor. Requires Mg(2+) as cofactor.

It catalyses the reaction ssDNA + n NTP = ssDNA/pppN(pN)n-1 hybrid + (n-1) diphosphate.. In terms of biological role, RNA polymerase that catalyzes the synthesis of short RNA molecules used as primers for DNA polymerase during DNA replication. In Pseudomonas putida (strain ATCC 47054 / DSM 6125 / CFBP 8728 / NCIMB 11950 / KT2440), this protein is DNA primase.